A 424-amino-acid chain; its full sequence is Probable serine/threonine-protein kinase PBL15 (424 aa).

The Protein kinase domain maps to 99 to 380; sequence FSGNYLLGEG…AVVEALESLI (282 aa). ATP is bound by residues 105-113 and Lys-134; that span reads LGEGGFGKV. Tyr-179 bears the Phosphotyrosine mark. The active-site Proton acceptor is Asp-229. Residue Ser-233 is modified to Phosphoserine. A phosphothreonine mark is found at Thr-264 and Thr-269. Residue Tyr-277 is modified to Phosphotyrosine. The disordered stretch occupies residues 390–424; that stretch reads GHWPLSPKSQGGKVSPKVRGDHRSGRKSAPGSLRS.

Belongs to the protein kinase superfamily. Ser/Thr protein kinase family. In terms of assembly, interacts with the Xanthomonas campestris effector XopAC/AvrAC.

The protein localises to the cell membrane. It catalyses the reaction L-seryl-[protein] + ATP = O-phospho-L-seryl-[protein] + ADP + H(+). The catalysed reaction is L-threonyl-[protein] + ATP = O-phospho-L-threonyl-[protein] + ADP + H(+). In terms of biological role, may be involved in plant defense signaling. The protein is Probable serine/threonine-protein kinase PBL15 of Arabidopsis thaliana (Mouse-ear cress).